A 184-amino-acid chain; its full sequence is Two-component response regulator ARR5 (184 aa).

The 129-residue stretch at 26 to 154 (HVLAVDDSMV…DVKRLRDSLM (129 aa)) folds into the Response regulatory domain. Aspartate 87 bears the 4-aspartylphosphate mark.

Belongs to the ARR family. Type-A subfamily. Post-translationally, two-component system major event consists of a His-to-Asp phosphorelay between a sensor histidine kinase (HK) and a response regulator (RR). In plants, the His-to-Asp phosphorelay involves an additional intermediate named Histidine-containing phosphotransfer protein (HPt). This multistep phosphorelay consists of a His-Asp-His-Asp sequential transfer of a phosphate group between first a His and an Asp of the HK protein, followed by the transfer to a conserved His of the HPt protein and finally the transfer to an Asp in the receiver domain of the RR protein. In terms of tissue distribution, predominantly expressed in roots and shoot apical meristems.

It localises to the nucleus. Its function is as follows. Functions as a response regulator involved in His-to-Asp phosphorelay signal transduction system. Phosphorylation of the Asp residue in the receiver domain activates the ability of the protein to promote the transcription of target genes. Type-A response regulators seem to act as negative regulators of the cytokinin signaling. In Arabidopsis thaliana (Mouse-ear cress), this protein is Two-component response regulator ARR5 (ARR5).